The sequence spans 204 residues: Minor allergen Alt a 7 (204 aa).

In terms of domain architecture, Flavodoxin-like spans 5–195 (IAIVYYSMYG…NIAQAQGKAF (191 aa)).

It belongs to the WrbA family.

It localises to the cytoplasm. This is Minor allergen Alt a 7 (ALTA7) from Alternaria alternata (Alternaria rot fungus).